A 130-amino-acid chain; its full sequence is B1 protein (130 aa).

Residues Leu1–Ala12 form the signal peptide. 2 cysteine pairs are disulfide-bonded: Cys28-Cys59 and Cys99-Cys116.

The protein belongs to the PBP/GOBP family. N-glycosylated. As to expression, tubular accessory sex gland.

The protein resides in the secreted. Its function is as follows. May be a carrier protein for lipids. The protein is B1 protein of Tenebrio molitor (Yellow mealworm beetle).